The chain runs to 166 residues: Transcription factor HES-5 (166 aa).

Residues 16-72 form the bHLH domain; it reads KNRLRKPVVEKMRRDRINSSIEQLKLLLEQEFARHQPNSKLEKADILEMAVSYLKHS. In terms of domain architecture, Orange spans 88–119; it reads YSEGYSWCLQEAVQFLTLHAASDTQMKLLYHF. Residues 125–144 form a disordered region; sequence APAAPAKEPKAPGAAPPPAL. Positions 163 to 166 match the WRPW motif motif; it reads WRPW.

Transcription repression requires formation of a complex with a corepressor protein of the Groucho/TLE family. As to expression, expressed in fetal heart and brain tumors.

The protein localises to the nucleus. Its function is as follows. Transcriptional repressor of genes that require a bHLH protein for their transcription. Plays an important role as neurogenesis negative regulator. This chain is Transcription factor HES-5 (HES5), found in Homo sapiens (Human).